The sequence spans 269 residues: 4-hydroxy-tetrahydrodipicolinate reductase (269 aa).

11–16 (GPIGRM) serves as a coordination point for NAD(+). Lys39 provides a ligand contact to NADP(+). NAD(+) contacts are provided by residues 101–103 (GTT) and 125–128 (ASNF). The active-site Proton donor/acceptor is His158. His159 serves as a coordination point for (S)-2,3,4,5-tetrahydrodipicolinate. The active-site Proton donor is Lys162. 168–169 (GT) is a (S)-2,3,4,5-tetrahydrodipicolinate binding site.

The protein belongs to the DapB family. Homotetramer.

The protein resides in the cytoplasm. It catalyses the reaction (S)-2,3,4,5-tetrahydrodipicolinate + NAD(+) + H2O = (2S,4S)-4-hydroxy-2,3,4,5-tetrahydrodipicolinate + NADH + H(+). It carries out the reaction (S)-2,3,4,5-tetrahydrodipicolinate + NADP(+) + H2O = (2S,4S)-4-hydroxy-2,3,4,5-tetrahydrodipicolinate + NADPH + H(+). It functions in the pathway amino-acid biosynthesis; L-lysine biosynthesis via DAP pathway; (S)-tetrahydrodipicolinate from L-aspartate: step 4/4. Catalyzes the conversion of 4-hydroxy-tetrahydrodipicolinate (HTPA) to tetrahydrodipicolinate. The protein is 4-hydroxy-tetrahydrodipicolinate reductase of Buchnera aphidicola subsp. Acyrthosiphon pisum (strain APS) (Acyrthosiphon pisum symbiotic bacterium).